A 320-amino-acid polypeptide reads, in one-letter code: ATP-dependent 6-phosphofructokinase (320 aa).

Residue Gly-12 participates in ATP binding. ADP-binding positions include 22–26 (RGVVR) and 55–60 (RYSVSD). Residues 73 to 74 (RF) and 103 to 106 (GDGS) each bind ATP. Asp-104 lines the Mg(2+) pocket. 126 to 128 (TID) contributes to the substrate binding site. The Proton acceptor role is filled by Asp-128. Arg-155 is an ADP binding site. Substrate is bound by residues Arg-163 and 170 to 172 (MGR). Residues 186–188 (GCE), Lys-212, and 214–216 (KKH) each bind ADP. Residues Glu-223, Arg-244, and 250 to 253 (HIQR) each bind substrate.

The protein belongs to the phosphofructokinase type A (PFKA) family. ATP-dependent PFK group I subfamily. Prokaryotic clade 'B1' sub-subfamily. In terms of assembly, homotetramer. It depends on Mg(2+) as a cofactor.

The protein resides in the cytoplasm. The catalysed reaction is beta-D-fructose 6-phosphate + ATP = beta-D-fructose 1,6-bisphosphate + ADP + H(+). Its pathway is carbohydrate degradation; glycolysis; D-glyceraldehyde 3-phosphate and glycerone phosphate from D-glucose: step 3/4. Allosterically activated by ADP and other diphosphonucleosides, and allosterically inhibited by phosphoenolpyruvate. Its function is as follows. Catalyzes the phosphorylation of D-fructose 6-phosphate to fructose 1,6-bisphosphate by ATP, the first committing step of glycolysis. This is ATP-dependent 6-phosphofructokinase from Buchnera aphidicola subsp. Schizaphis graminum (strain Sg).